Here is a 130-residue protein sequence, read N- to C-terminus: Glycoprotein hormone alpha-2 (130 aa).

The first 22 residues, 1-22 (MPMAPRVLLFCLLGLAVTEGHG), serve as a signal peptide directing secretion. 4 disulfides stabilise this stretch: C32–C90, C49–C104, C58–C120, and C62–C122. Residues N38 and N82 are each glycosylated (N-linked (GlcNAc...) asparagine).

The protein belongs to the glycoprotein hormones subunit alpha family. In terms of assembly, heterodimer with GPHB5; this heterodimer interacts with thyroid-stimulating hormone receptor (TSHR), and hence stimulates cAMP production.

It localises to the secreted. Functionally, functions as a heterodimeric glycoprotein hormone with GPHB5 able to bind and activate the thyroid-stimulating hormone receptor (TSHR), leading to increased cAMP production. Plays a central role in controlling thyroid cell metabolism. The chain is Glycoprotein hormone alpha-2 (Gpha2) from Rattus norvegicus (Rat).